The following is a 420-amino-acid chain: Serine hydroxymethyltransferase (420 aa).

Residues Leu-121 and 125 to 127 (GHL) each bind (6S)-5,6,7,8-tetrahydrofolate. N6-(pyridoxal phosphate)lysine is present on Lys-229.

Belongs to the SHMT family. In terms of assembly, homodimer. It depends on pyridoxal 5'-phosphate as a cofactor.

It localises to the cytoplasm. The catalysed reaction is (6R)-5,10-methylene-5,6,7,8-tetrahydrofolate + glycine + H2O = (6S)-5,6,7,8-tetrahydrofolate + L-serine. Its pathway is one-carbon metabolism; tetrahydrofolate interconversion. The protein operates within amino-acid biosynthesis; glycine biosynthesis; glycine from L-serine: step 1/1. Its function is as follows. Catalyzes the reversible interconversion of serine and glycine with tetrahydrofolate (THF) serving as the one-carbon carrier. This reaction serves as the major source of one-carbon groups required for the biosynthesis of purines, thymidylate, methionine, and other important biomolecules. Also exhibits THF-independent aldolase activity toward beta-hydroxyamino acids, producing glycine and aldehydes, via a retro-aldol mechanism. This chain is Serine hydroxymethyltransferase, found in Pasteurella multocida (strain Pm70).